A 250-amino-acid chain; its full sequence is MMNIVENQTVVRRAPDNAGEERVLAARPEAIGFTPQQTALIVVDMQNAYASQGGYLDLAGFDVSATAPVIANIKVAIAAARAAGIKVIFFQNGWDNQYVEAGGRARPTSINPMRLKTMRKRPELMGKLLAKGDWDYDLVDELQPQPGDIVLPKPRYSGFFNTQLDSLLRSYGIHHLVFTGIATNVCVESTLRDGFFLEYFGVVLEDATHQAGPEFAQKAAIYNIETFFGWVSSVSHFCDAVGYKTEQNAA.

Asp-44 (proton acceptor) is an active-site residue. The active site involves Lys-153. Residue Cys-186 is the Nucleophile of the active site.

Belongs to the isochorismatase family. RutB subfamily.

The enzyme catalyses (Z)-3-ureidoacrylate + H2O + H(+) = (Z)-3-aminoacrylate + NH4(+) + CO2. It catalyses the reaction (Z)-3-ureidoacrylate + H2O = (Z)-3-aminoacrylate + carbamate + H(+). It carries out the reaction (Z)-2-methylureidoacrylate + H2O + H(+) = (Z)-2-methylaminoacrylate + NH4(+) + CO2. Hydrolyzes ureidoacrylate to form aminoacrylate and carbamate. The carbamate hydrolyzes spontaneously, thereby releasing one of the nitrogen atoms of the pyrimidine ring as ammonia and one of its carbon atoms as CO2. This chain is Ureidoacrylate amidohydrolase RutB, found in Pantoea ananatis (strain LMG 20103).